The primary structure comprises 247 residues: Adenosylcobinamide-GDP ribazoletransferase (247 aa).

5 helical membrane-spanning segments follow: residues 34 to 54 (IVMF…IFIL), 59 to 79 (CGIP…TGGF), 113 to 133 (GGLA…ELAL), 138 to 158 (MLAA…LLMY), and 187 to 207 (LAVI…AMVV).

It belongs to the CobS family. Mg(2+) serves as cofactor.

The protein resides in the cell inner membrane. The catalysed reaction is alpha-ribazole + adenosylcob(III)inamide-GDP = adenosylcob(III)alamin + GMP + H(+). It catalyses the reaction alpha-ribazole 5'-phosphate + adenosylcob(III)inamide-GDP = adenosylcob(III)alamin 5'-phosphate + GMP + H(+). It participates in cofactor biosynthesis; adenosylcobalamin biosynthesis; adenosylcobalamin from cob(II)yrinate a,c-diamide: step 7/7. Joins adenosylcobinamide-GDP and alpha-ribazole to generate adenosylcobalamin (Ado-cobalamin). Also synthesizes adenosylcobalamin 5'-phosphate from adenosylcobinamide-GDP and alpha-ribazole 5'-phosphate. The polypeptide is Adenosylcobinamide-GDP ribazoletransferase (Salmonella dublin (strain CT_02021853)).